The following is a 289-amino-acid chain: MKKIKVKAYAKINLSLDVLGKRKDGYHEISTVMQSIDLADILEFEKSEIVKVFCSGHRVPEGEDNLIVKVINFLKEKYQIEEGVLVRLDKKIPLAAGLAGGSADAAATIVALDKLWNLNMSADEKKEIALKVGADVPFCLEGGTKLAKGIGEIFEDLNVPHMNLLLVKPDIEIFTKKIYDKWDRLNFKSHHATCSVVQAIQEGNIYKIAENIKNDLELVTSRECEVINQIKEELLKKGALGCAMSGSGPTVYGIFDDLQKLIKAYKNLEGIYSFVFFSKTIDKGLELYE.

Lys-11 is an active-site residue. 93 to 103 (PLAAGLAGGSA) contributes to the ATP binding site. Asp-135 is an active-site residue.

This sequence belongs to the GHMP kinase family. IspE subfamily.

It carries out the reaction 4-CDP-2-C-methyl-D-erythritol + ATP = 4-CDP-2-C-methyl-D-erythritol 2-phosphate + ADP + H(+). The protein operates within isoprenoid biosynthesis; isopentenyl diphosphate biosynthesis via DXP pathway; isopentenyl diphosphate from 1-deoxy-D-xylulose 5-phosphate: step 3/6. Its function is as follows. Catalyzes the phosphorylation of the position 2 hydroxy group of 4-diphosphocytidyl-2C-methyl-D-erythritol. The polypeptide is 4-diphosphocytidyl-2-C-methyl-D-erythritol kinase (Thermoanaerobacter sp. (strain X514)).